The following is a 235-amino-acid chain: Leucyl/phenylalanyl-tRNA--protein transferase (235 aa).

The protein belongs to the L/F-transferase family.

Its subcellular location is the cytoplasm. The catalysed reaction is N-terminal L-lysyl-[protein] + L-leucyl-tRNA(Leu) = N-terminal L-leucyl-L-lysyl-[protein] + tRNA(Leu) + H(+). It catalyses the reaction N-terminal L-arginyl-[protein] + L-leucyl-tRNA(Leu) = N-terminal L-leucyl-L-arginyl-[protein] + tRNA(Leu) + H(+). The enzyme catalyses L-phenylalanyl-tRNA(Phe) + an N-terminal L-alpha-aminoacyl-[protein] = an N-terminal L-phenylalanyl-L-alpha-aminoacyl-[protein] + tRNA(Phe). Its function is as follows. Functions in the N-end rule pathway of protein degradation where it conjugates Leu, Phe and, less efficiently, Met from aminoacyl-tRNAs to the N-termini of proteins containing an N-terminal arginine or lysine. The sequence is that of Leucyl/phenylalanyl-tRNA--protein transferase from Cellvibrio japonicus (strain Ueda107) (Pseudomonas fluorescens subsp. cellulosa).